The following is a 670-amino-acid chain: METEIPRSTEISETLLLPETNLDHGEYVPEWKEQITIRGLISSALLGILFCIITHKLNLTIGIIPSLNVAAGLLGFFFIKSWTGFLSKLGFLSKPFTKQENTVIQTCVVSCYGLAYSGGFGSYLIAMDERTYKLIGSDYPGNNPEDVINPGLWWMTGFLFVVSFLGLFCLVPLRKVMILDYKLTYPSGTATAMLINSFHNNTGAELAGKQVKCLGKYLSLSLVWSCFKWFFSGIGGACGFDHFPTLGLTLFKNTFYFDFSPTFIGCGMICPHLVNCSVLLGAIISWGFLWPFISQHAGDWYPADLKANDFKGLYGYKVFIAISIILGDGLYNLIKIIVVTVKEICNKSSRQHNLPVFTDILDKSKTSVLMREKKKRDIIFLKDRIPLEFAVSGYVGLAAISTAIIPLIFPPLKWYFVLCSYLVAPGLAFCNSYGAGLTDMSMPSTYGKTGLFIVASIVGNNGGVIAGLAACGIMMSIVSTAADLMQDFKTGYLTLSSAKSMFVTQLLGTAMGCIIAPLTFWLFWTAFDIGDPDGLYKAPYAVIYREMAILGVEGFAKLPKHCLALCCGFFIAALIVNLIRDMTPPKISKLIPLPMAMAGPFYIGAYFAIDMFVGTVIMLVWERMNKKDADDYSGAVASGLICGDGIWTIPSAILSILRINPPICMYFRPS.

13 consecutive transmembrane segments (helical) span residues 35–55 (ITIRGLISSALLGILFCIITH), 59–79 (LTIGIIPSLNVAAGLLGFFFI), 107–127 (CVVSCYGLAYSGGFGSYLIAM), 151–171 (GLWWMTGFLFVVSFLGLFCLV), 273–293 (LVNCSVLLGAIISWGFLWPFI), 318–338 (VFIAISIILGDGLYNLIKIIV), 389–409 (FAVSGYVGLAAISTAIIPLIF), 416–436 (FVLCSYLVAPGLAFCNSYGAG), 450–470 (GLFIVASIVGNNGGVIAGLAA), 507–527 (LGTAMGCIIAPLTFWLFWTAF), 559–579 (PKHCLALCCGFFIAALIVNLI), 601–621 (FYIGAYFAIDMFVGTVIMLVW), and 636–656 (VASGLICGDGIWTIPSAILSI).

This sequence belongs to the YSL (TC 2.A.67.2) family.

It is found in the membrane. Its function is as follows. May be involved in the transport of nicotianamine-chelated metals. This chain is Probable metal-nicotianamine transporter YSL4 (YSL4), found in Arabidopsis thaliana (Mouse-ear cress).